Reading from the N-terminus, the 229-residue chain is Large ribosomal subunit protein uL1 (229 aa).

It belongs to the universal ribosomal protein uL1 family. Part of the 50S ribosomal subunit.

In terms of biological role, binds directly to 23S rRNA. The L1 stalk is quite mobile in the ribosome, and is involved in E site tRNA release. Functionally, protein L1 is also a translational repressor protein, it controls the translation of the L11 operon by binding to its mRNA. The polypeptide is Large ribosomal subunit protein uL1 (Actinobacillus pleuropneumoniae serotype 3 (strain JL03)).